A 248-amino-acid polypeptide reads, in one-letter code: Ubiquinone/menaquinone biosynthesis C-methyltransferase UbiE (248 aa).

Ser-68 and Asp-92 together coordinate S-adenosyl-L-methionine.

Belongs to the class I-like SAM-binding methyltransferase superfamily. MenG/UbiE family.

The enzyme catalyses a 2-demethylmenaquinol + S-adenosyl-L-methionine = a menaquinol + S-adenosyl-L-homocysteine + H(+). The catalysed reaction is a 2-methoxy-6-(all-trans-polyprenyl)benzene-1,4-diol + S-adenosyl-L-methionine = a 5-methoxy-2-methyl-3-(all-trans-polyprenyl)benzene-1,4-diol + S-adenosyl-L-homocysteine + H(+). It functions in the pathway quinol/quinone metabolism; menaquinone biosynthesis; menaquinol from 1,4-dihydroxy-2-naphthoate: step 2/2. Its pathway is cofactor biosynthesis; ubiquinone biosynthesis. In terms of biological role, methyltransferase required for the conversion of demethylmenaquinol (DMKH2) to menaquinol (MKH2) and the conversion of 2-polyprenyl-6-methoxy-1,4-benzoquinol (DDMQH2) to 2-polyprenyl-3-methyl-6-methoxy-1,4-benzoquinol (DMQH2). The protein is Ubiquinone/menaquinone biosynthesis C-methyltransferase UbiE of Rickettsia akari (strain Hartford).